Consider the following 98-residue polypeptide: U1-theraphotoxin-Ap1a (98 aa).

Residues 1-23 (MRSLTLAAVLACSLLLVFHTSAA) form the signal peptide. The propeptide occupies 24–50 (EELEVQDGHLMNPGDGDTALATVDDER). Intrachain disulfides connect C54–C84, C58–C90, and C72–C95. Positions 63–84 (DGKSKEGKPCKPKGDKNKDKKC) are disordered.

The protein belongs to the neurotoxin 12 (Hwtx-2) family. 01 (Ap1a) subfamily. Expressed by the venom gland.

It localises to the secreted. Is toxic to both insects and mammals. Induces reversible paralysis when injected into S.frugiperda larvae. Reduces both the amplitude and frequency of responses from muscle (GF-TTM and GF-DLM) pathways in the D.melanogaster giant fiber circuit, suggesting an action at the neuromuscular junction, which is mediated by glutamatergic receptors. In mice, intracranial injection of 30 ug causes increased urination, myoclonus, hypermotility with circular movements followed by respiratory and generalized seizures resulting in death within 25-35 minutes of injection. In Acanthoscurria paulensis (Brazilian giant black tarantula spider), this protein is U1-theraphotoxin-Ap1a.